The following is a 71-amino-acid chain: Antitoxin ParD2 (71 aa).

Functionally, antitoxin component of a type II toxin-antitoxin (TA) system. The protein is Antitoxin ParD2 (parD2) of Mycobacterium tuberculosis (strain CDC 1551 / Oshkosh).